The following is a 308-amino-acid chain: Ferredoxin--NADP reductase (308 aa).

Residues E26, Q34, Y39, V77, F106, D266, and T306 each coordinate FAD.

This sequence belongs to the ferredoxin--NADP reductase type 2 family. Homodimer. It depends on FAD as a cofactor.

The catalysed reaction is 2 reduced [2Fe-2S]-[ferredoxin] + NADP(+) + H(+) = 2 oxidized [2Fe-2S]-[ferredoxin] + NADPH. The chain is Ferredoxin--NADP reductase from Lactobacillus delbrueckii subsp. bulgaricus (strain ATCC 11842 / DSM 20081 / BCRC 10696 / JCM 1002 / NBRC 13953 / NCIMB 11778 / NCTC 12712 / WDCM 00102 / Lb 14).